Here is a 392-residue protein sequence, read N- to C-terminus: ATP phosphoribosyltransferase regulatory subunit (392 aa).

This sequence belongs to the class-II aminoacyl-tRNA synthetase family. HisZ subfamily. In terms of assembly, heteromultimer composed of HisG and HisZ subunits.

It localises to the cytoplasm. The protein operates within amino-acid biosynthesis; L-histidine biosynthesis; L-histidine from 5-phospho-alpha-D-ribose 1-diphosphate: step 1/9. Its function is as follows. Required for the first step of histidine biosynthesis. May allow the feedback regulation of ATP phosphoribosyltransferase activity by histidine. In Prochlorococcus marinus (strain MIT 9303), this protein is ATP phosphoribosyltransferase regulatory subunit.